Reading from the N-terminus, the 373-residue chain is MAKSVNGQQIIQLFEQFSPKAYAVEGDKIGLQIGTLNKPIKNVMVTLDVLESVIDEAIEKEVDLIIAHHPPIFRSLKHISTDQPAGRLIEKCLKHDIAVYAAHTNLDVADGGVNDLLAEALELSETEVLAPTYTDPLKKLAVYVPKEYEEQVRAALGNAGAGHIGEYSHCAFSSEGIGSFKPLDGAKPFIGEVGELELVHEVRLETVFPKSVEKAVINAMIKSHPYEEVAYDIYPVEQTPAEKGLGRVGTLKNEMTLKEFALFVKDKLDVNGVRMVGDADSMVKKVAVLGGDGNKYIHHAKRKGADVYVTGDLYFHVAHDAMMLGLNVVDPGHYAEKIMKEGVTRKLTSMCNDKKFGVNIFVSETDTNPFTFL.

A divalent metal cation contacts are provided by histidine 68, histidine 69, aspartate 107, histidine 333, and glutamate 336.

The protein belongs to the GTP cyclohydrolase I type 2/NIF3 family. Homohexamer.

This chain is GTP cyclohydrolase 1 type 2 homolog (yqfO), found in Bacillus subtilis (strain 168).